Reading from the N-terminus, the 624-residue chain is Aeromonas extracellular serine protease (624 aa).

Residues 1-24 (MKQTSLALAITALLSTLPSALVQA) form the signal peptide. An intrachain disulfide couples Cys28 to Cys48. Position 53 (Asn53) interacts with Ca(2+). The Peptidase S8 domain maps to 59–421 (QWYLLNSGQD…GKVRDVKGLE (363 aa)). The active-site Charge relay system is Asp102. Asp111 contributes to the Ca(2+) binding site. Residues 116-140 (VRPGSKNVVTGSDDPTPTDPDTAHG) are disordered. Residue His139 is the Charge relay system of the active site. Ca(2+) is bound by residues Val150, Asn152, Ile154, Thr156, Asp321, Leu322, Gly324, Met327, Asn330, and Cys350. Cys325 and Cys350 form a disulfide bridge. Ser360 acts as the Charge relay system in catalysis. One can recognise a P/Homo B domain in the interval 456–622 (LPPLVQLPWQ…SLRVLGHDAN (167 aa)). The Ca(2+) site is built by Asp478, Asp512, Asp577, Ala579, Asn602, and Asn603.

The protein belongs to the peptidase S8 family. Furin subfamily. In terms of assembly, forms a complex with the chaperone ORF2 in the periplasm. After translocation of the ASP-ORF2 complex from the periplasm to the extracellular space, the complex is dissociated in a pH-dependent manner. The cofactor is Ca(2+).

It is found in the periplasm. The protein resides in the secreted. It catalyses the reaction Cleavage of -Lys-Lys-|-Xaa and -Lys-Arg-|-Xaa bonds.. With respect to regulation, folding, maturation and production of the active form of the protease by the cell requires a protein (ORF2), encoded just downstream of asp, which acts as a chaperone. Formation of a complex with ORF2 in the periplasm also inactivates the protease activity and likely protects ASP from intrinsic proteases. In vitro, protease activity is inhibited by human alpha-2-macroglobulin, suggesting that this inhibitor can impede ASP virulence activities in A.sobria infection sites. However, slow ASP inhibition by alpha-2-macroglobulin in plasma may indicate insufficient ASP control in vivo. Activity is inhibited by serine protease inhibitors such as 4-(2-aminoethyl)-benzenesulfonyl fluoride (AEBSF) and diisopropyl fluorophosphate (DFP). Not inhibited by metallo-protease inhibitors and cysteine protease inhibitors. The treatment with reagents to modify sulfhydryl group do not reduce the activity. Its function is as follows. Exhibits serine protease activity. Preferentially cleaves the peptide bond following two basic residues, one of which is Lys, but does not recognize the bond following a single basic residue. Probable potent virulence factor that cleaves various host plasma proteins, including prekallikrein, prothrombin and fibrinogen. ASP induces vascular leakage and reduction in blood pressure by activating the host plasma kallikrein/kinin system. It affects the host coagulation system during infection through activation of prothrombin to alpha-thrombin and degradation of fibrinogen, which impairs plasma clottability. It also hydrolyzes the complement component C5, releasing the C5a anaphylatoxin, which causes the formation of pus and edema. In addition, degrades its external chaperone ORF2 after the secretion of the ASP-ORF2 complex. In Aeromonas sobria, this protein is Aeromonas extracellular serine protease.